Consider the following 364-residue polypeptide: Heme A synthase (364 aa).

Helical transmembrane passes span 25-45, 111-131, 139-159, 174-194, 212-232, 270-290, 305-325, and 327-347; these read ALRL…LVGG, FLAR…WATG, WPLV…WWMV, LATH…VMRG, AIAL…VAGL, VQFV…YHMV, SVVL…ALLL, and VPLD…GFTV. Residue His-274 coordinates heme. Residue His-335 coordinates heme.

The protein belongs to the COX15/CtaA family. Type 2 subfamily. As to quaternary structure, interacts with CtaB. It depends on heme b as a cofactor.

Its subcellular location is the cell membrane. It catalyses the reaction Fe(II)-heme o + 2 A + H2O = Fe(II)-heme a + 2 AH2. It functions in the pathway porphyrin-containing compound metabolism; heme A biosynthesis; heme A from heme O: step 1/1. In terms of biological role, catalyzes the conversion of heme O to heme A by two successive hydroxylations of the methyl group at C8. The first hydroxylation forms heme I, the second hydroxylation results in an unstable dihydroxymethyl group, which spontaneously dehydrates, resulting in the formyl group of heme A. This chain is Heme A synthase, found in Allorhizobium ampelinum (strain ATCC BAA-846 / DSM 112012 / S4) (Agrobacterium vitis (strain S4)).